A 483-amino-acid polypeptide reads, in one-letter code: Cytochrome P450 monooxygenase stcF (483 aa).

A heme-binding site is contributed by Cys424.

Belongs to the cytochrome P450 family. Heme serves as cofactor.

Its pathway is mycotoxin biosynthesis; sterigmatocystin biosynthesis. Cytochrome P450 monooxygenase; part of the gene cluster that mediates the biosynthesis of sterigmatocystin (ST), a polyketide-derived furanocoumarin which is part of the most toxic and carcinogenic compounds among the known mycotoxins. The first step in the biosynthesis of sterigmatocystin is the production of hexanoate by the fatty acid synthase (FAS) units stcJ and stcK. The polyketide backbone is assembled by the non-reducing polyketide synthase stcA by condensation of the starter hexanoyl-CoA and 7 malonyl-CoA extender units followed by cyclization and release of norsolorinic acid. Norsolorinic acid is the first stable intermediate in the biosynthesis of sterigmatocystin and is converted into averantin (AVN) by the ketoreductase stcE which reduces the hexanoate ketone to an alcohol. Averantin is then oxidized into 5'-hydroxyaverantin (HAVN) by the cytochrome P450 monooxygenase stcF. 5'-hydroxyaverantin is further converted to 5'-oxyaverantin (OAVN) by the 5'-hydroxyaverantin dehydrogenase stcG. The next step is the conversion of OAVN into averufin (AVF) which is catalyzed by a yet to be identified enzyme. The cytochrome P450 monooxygenase stcB and the flavin-binding monooxygenase stcW are both required for the conversion of averufin to 1-hydroxyversicolorone. The esterase stcI probably catalyzes the formation of versiconal hemiacetal acetate from 1-hydroxyversicolorone. The oxydoreductase stcN then probably catalyzes the biosynthetic step from versiconal to versicolorin B (VERB). The next step is performed by the versicolorin B desaturase stcL to produce versicolorin A (VERA). The ketoreductase stcU and the cytochrome P450 monooxygenase stcS are involved in the conversion of versicolorin A to demethylsterigmatocystin. The Baeyer-Villiger oxidas stcQ and the reductase stcR might be involved in the biosynthetic step from versicolorin A to demethylsterigmatocystin. The final step in the biosynthesis of sterigmatocystin is the methylation of demethylsterigmatocystin catalyzed by the methyltransferase stcP. The chain is Cytochrome P450 monooxygenase stcF from Emericella nidulans (strain FGSC A4 / ATCC 38163 / CBS 112.46 / NRRL 194 / M139) (Aspergillus nidulans).